The chain runs to 135 residues: uncharacterized protein (135 aa).

Transmembrane regions (helical) follow at residues 11-31 (ILFF…GYLI) and 57-77 (LGTA…TDAI).

Its subcellular location is the cell membrane. This is an uncharacterized protein from Methanocaldococcus jannaschii (strain ATCC 43067 / DSM 2661 / JAL-1 / JCM 10045 / NBRC 100440) (Methanococcus jannaschii).